A 619-amino-acid polypeptide reads, in one-letter code: MEFPGGNDNYLTITGPSHPFLSGAETFHTPSLGDEEFEIPPISLDSDPSLAVSDVVGHFDDLADPSSSQDGSFSAQYGVQTLDMPVGMTHGLMEQGGGLLSGGLTMDLDHSIGTQYSANPPVTIDVPMTDMTSGLMGHSQLTTIDQSELSSQLGLSLGGGTILPPAQSPEDRLSTTPSPTNSLHEDGVDDFRRQLPAQKTVVVETGKKQKAPKKRKKKDPNEPQKPVSAYALFFRDTQAAIKGQNPNATFGEVSKIVASMWDSLGEEQKQVYKRKTEAAKKEYLKALAAYKDNQECQATVETVELDPVPQSQTPSPPPVTAADPASPAPASTESPALPPCIIVNSTLSSYVANQASSGPGGQPNITKLIITKQMLPSSITMSQGGMVTVIPATVVTSRGLQVGQTSTATIQPSQQAQIVTRSVLQAAAAAAASMQLPPPRLQPPPLQQMPQPPTQQQVTILQQPPPLQAMQQPPPQKVRINLQQQPPPLQSKIVPPPTLKIQTTVVPPTVESSPEQPMNSSPEAHTVEATSPETICEMIADVVPEVESPSQMDVELVSGSPVALSPQPRCVRSGCENPPVVSKDWDNEYCSNECVVKHCRDVFLAWVASRNPNSVVFVK.

Disordered regions lie at residues 155–227 and 306–335; these read LSLG…QKPV and DPVP…TESP. Threonine 176 is modified (phosphothreonine). Phosphoserine is present on residues serine 178 and serine 182. The span at 183-193 shows a compositional bias: basic and acidic residues; the sequence is LHEDGVDDFRR. A compositionally biased stretch (basic residues) spans 208 to 218; the sequence is KQKAPKKRKKK. A Nuclear localization signal motif is present at residues 213-218; it reads KKRKKK. Residues 223-291 constitute a DNA-binding region (HMG box); it reads PQKPVSAYAL…EYLKALAAYK (69 aa). Phosphothreonine is present on threonine 313. At serine 315 the chain carries Phosphoserine. The span at 320–335 shows a compositional bias: low complexity; the sequence is TAADPASPAPASTESP. Asymmetric dimethylarginine is present on arginine 479. A phosphoserine mark is found at serine 531, serine 548, serine 550, serine 558, serine 560, and serine 565.

In terms of assembly, component of the PNUTS-PP1 phosphatase complex, composed of PPP1R10/PNUTS, TOX4, WDR82 and PPP1CA or PPP1CB or PPP1CC. Interacts with PPP1R10/PNUTS. Interacts with FOXO1 and CREB1 (increased by cAMP); FOXO1 and CREB1 are required for full induction of TOX4-dependent activity and the interactions are inhibited by insulin.

The protein resides in the nucleus. It is found in the chromosome. Its activity is regulated as follows. In liver, recruited to target gene promoters following treatment with dexamethasone and cAMP. Binding is decreased in presence of insulin. Transcription factor that modulates cell fate reprogramming from the somatic state to the pluripotent and neuronal fate. In liver, controls the expression of hormone-regulated gluconeogenic genes such as G6PC1 and PCK1. This regulation is independent of the insulin receptor activation. Also acts as a regulatory component of protein phosphatase 1 (PP1) complexes. Component of the PNUTS-PP1 protein phosphatase complex, a PP1 complex that regulates RNA polymerase II transcription pause-release. PNUTS-PP1 also plays a role in the control of chromatin structure and cell cycle progression during the transition from mitosis into interphase. This Mus musculus (Mouse) protein is TOX high mobility group box family member 4.